The following is a 787-amino-acid chain: Probable basic-leucine zipper transcription factor J (787 aa).

Low complexity predominate over residues 18 to 90 (NSNIHNNTHN…NNTQNTNNGT (73 aa)). Disordered regions lie at residues 18 to 95 (NSNI…LTPL), 153 to 173 (LNLSSTGNHEDPVQVPMNNNP), 186 to 306 (LQSQ…NNNT), 343 to 372 (DSLLNQTLNNNNNNNNNNNNNNNNTTIQTS), 401 to 441 (LSSA…NNSN), and 473 to 507 (ASSESAQSESSQESDYDALNERNSGVKKRGRDEDQ). 4 stretches are compositionally biased toward low complexity: residues 186-223 (LQSQNNNSSNNNNNNNNNGSNTPLNGSNGSNNNYSSPI), 235-258 (SSPIQEYPYYSPSSSPHSNESTSP), 273-305 (NNNNNNNNNNNNNNNNNNNNNNNNNNKNNLNNN), and 351-366 (NNNNNNNNNNNNNNNN). A compositionally biased stretch (low complexity) spans 473–483 (ASSESAQSESS). A bZIP domain is found at 549–612 (ELKKQRRLVK…KALKKQLYSL (64 aa)). Positions 551–603 (KKQRRLVKNREYASQSRSRRKIYVENIETKLQKTNQDCASIKSQLNSVKEENK) are basic motif. Residues 605 to 612 (LKKQLYSL) form a leucine-zipper region. Disordered regions lie at residues 723 to 747 (SNYIINNNNNESTSETTTNNKVVST) and 763 to 787 (DKEVPQKCKDSSDLKCDSPPLSPLN). Positions 763–778 (DKEVPQKCKDSSDLKC) are enriched in basic and acidic residues.

The protein belongs to the bZIP family.

It localises to the nucleus. Functionally, probable transcriptional regulator. The polypeptide is Probable basic-leucine zipper transcription factor J (bzpJ) (Dictyostelium discoideum (Social amoeba)).